The primary structure comprises 294 residues: Porphobilinogen deaminase (294 aa).

S-(dipyrrolylmethanemethyl)cysteine is present on Cys-232.

It belongs to the HMBS family. As to quaternary structure, monomer. Requires dipyrromethane as cofactor.

The enzyme catalyses 4 porphobilinogen + H2O = hydroxymethylbilane + 4 NH4(+). It participates in porphyrin-containing compound metabolism; protoporphyrin-IX biosynthesis; coproporphyrinogen-III from 5-aminolevulinate: step 2/4. Its function is as follows. Tetrapolymerization of the monopyrrole PBG into the hydroxymethylbilane pre-uroporphyrinogen in several discrete steps. The chain is Porphobilinogen deaminase from Corynebacterium diphtheriae (strain ATCC 700971 / NCTC 13129 / Biotype gravis).